The following is a 362-amino-acid chain: Caveolae-associated protein 4 (362 aa).

Residues 1 to 24 (MEHNGSASNAGKIHQNRLSSVTED) form a disordered region. A coiled-coil region spans residues 100-120 (IKDVKARVEKQQVRVTKVETK). Phosphoserine occurs at positions 152, 171, and 172. Residues 227–255 (PERRERLRQSGERLRQSGERLRQSGERFK) are compositionally biased toward basic and acidic residues. The disordered stretch occupies residues 227 to 261 (PERRERLRQSGERLRQSGERLRQSGERFKKSISNA). The residue at position 324 (tyrosine 324) is a Phosphotyrosine. The residue at position 334 (threonine 334) is a Phosphothreonine. Serine 353 is subject to Phosphoserine.

Belongs to the CAVIN family. In terms of assembly, component of the CAVIN complex composed of CAVIN1, CAVIN2, CAVIN3 and CAVIN4. Interacts with CAVIN1, CAV3, ADRA1A and ADRA1B. Interacts with CAVIN2; this augments the transactivation of NPPA. Interacts with MAPK1 and MAPK3. In terms of tissue distribution, expressed at much higher levels in cardiomyocytes than in non-cardiomyocytes.

The protein resides in the cytoplasm. It localises to the myofibril. Its subcellular location is the sarcomere. The protein localises to the cytosol. It is found in the cell membrane. The protein resides in the sarcolemma. It localises to the membrane. Its subcellular location is the caveola. In terms of biological role, modulates the morphology of formed caveolae in cardiomyocytes, but is not required for caveolar formation. Facilitates the recruitment of MAPK1/3 to caveolae within cardiomyocytes and regulates alpha-1 adrenergic receptor-induced hypertrophic responses in cardiomyocytes through MAPK1/3 activation. Contributes to proper membrane localization and stabilization of caveolin-3 (CAV3) in cardiomyocytes. Induces RHOA activation and activates NPPA transcription and myofibrillar organization through the Rho/ROCK signaling pathway. The chain is Caveolae-associated protein 4 from Rattus norvegicus (Rat).